Consider the following 876-residue polypeptide: Valine--tRNA ligase (876 aa).

A 'HIGH' region motif is present at residues 44–54 (PNVTGKLHLGH). Residues 520-524 (KMSKS) carry the 'KMSKS' region motif. Lysine 523 lines the ATP pocket. Residues 805-876 (LEGLIDMDKE…VKARIEQLKA (72 aa)) adopt a coiled-coil conformation.

It belongs to the class-I aminoacyl-tRNA synthetase family. ValS type 1 subfamily. As to quaternary structure, monomer.

The protein resides in the cytoplasm. The catalysed reaction is tRNA(Val) + L-valine + ATP = L-valyl-tRNA(Val) + AMP + diphosphate. In terms of biological role, catalyzes the attachment of valine to tRNA(Val). As ValRS can inadvertently accommodate and process structurally similar amino acids such as threonine, to avoid such errors, it has a 'posttransfer' editing activity that hydrolyzes mischarged Thr-tRNA(Val) in a tRNA-dependent manner. In Staphylococcus carnosus (strain TM300), this protein is Valine--tRNA ligase.